A 299-amino-acid chain; its full sequence is METLLSPSTLLSPLRGSKKKPASPAASASSSSSSPARSVVSCALRRQQPPPQAVAAWRGDGGRGGGVGSWATFLQHGLAAAALSLAISMAPAPAPAVASEFDVLNGGPPEDTYVVDDAGVLSRVTKSDVKRLVRDLESRKNIRINFITVRKLTSKADAFEYADQVLEKWYPTVEEGNNKGIVVLVTSQKEGAITGGPAFVQAVGDEILDSTVSENLPVLATDEKYNEAIYTTAKRLAAAIDGLPDPGGPTFKDNKRESNFKTKEETEEKRGQFTLVVGGLLVIAFVVPMAQYYAYISKK.

Composition is skewed to low complexity over residues 1–14 and 22–36; these read METL…LSPL and ASPA…SSPA. The transit peptide at 1–41 directs the protein to the chloroplast; the sequence is METLLSPSTLLSPLRGSKKKPASPAASASSSSSSPARSVVS. Disordered stretches follow at residues 1–60 and 244–265; these read METL…WRGD and PDPG…TKEE. Residues 42 to 98 constitute a thylakoid transit peptide; that stretch reads CALRRQQPPPQAVAAWRGDGGRGGGVGSWATFLQHGLAAAALSLAISMAPAPAPAVA. A compositionally biased stretch (basic and acidic residues) spans 252–265; sequence KDNKRESNFKTKEE. Residues 276-296 traverse the membrane as a helical segment; it reads VVGGLLVIAFVVPMAQYYAYI.

This sequence belongs to the UPF0603 family.

It localises to the plastid. It is found in the chloroplast thylakoid membrane. The sequence is that of UPF0603 protein OsI_019212, chloroplastic from Oryza sativa subsp. indica (Rice).